The sequence spans 201 residues: Probable chemoreceptor glutamine deamidase CheD 2 (201 aa).

It belongs to the CheD family.

It catalyses the reaction L-glutaminyl-[protein] + H2O = L-glutamyl-[protein] + NH4(+). Probably deamidates glutamine residues to glutamate on methyl-accepting chemotaxis receptors (MCPs), playing an important role in chemotaxis. The polypeptide is Probable chemoreceptor glutamine deamidase CheD 2 (Chromobacterium violaceum (strain ATCC 12472 / DSM 30191 / JCM 1249 / CCUG 213 / NBRC 12614 / NCIMB 9131 / NCTC 9757 / MK)).